Consider the following 1406-residue polypeptide: Ubiquitin carboxyl-terminal hydrolase 6 (1406 aa).

A Rab-GAP TBC domain is found at G100–G292. Positions K348–T380 are disordered. In terms of domain architecture, USP spans T532–Q1369. The active-site Nucleophile is the C541. The disordered stretch occupies residues H1120–N1231. Positions E1129–L1155 are enriched in basic and acidic residues. Over residues L1156 to P1197 the composition is skewed to low complexity. The active-site Proton acceptor is the H1328. The tract at residues K1384–Q1406 is disordered.

This sequence belongs to the peptidase C19 family. As to quaternary structure, interacts with RAC1 and CDC42. Interacts (via Rab-GAP TBC domain) with ARF6. Interacts with calmodulin (CALM1, CALM2 and/or CALM3); the interaction is calcium-dependent. Monubiquitinated; ubiquitination is calmodulin and calcium dependent. Testis specific. Expressed in various cancer cell lines.

It is found in the cell membrane. The protein localises to the cytoplasm. Its subcellular location is the endosome. It carries out the reaction Thiol-dependent hydrolysis of ester, thioester, amide, peptide and isopeptide bonds formed by the C-terminal Gly of ubiquitin (a 76-residue protein attached to proteins as an intracellular targeting signal).. In terms of biological role, deubiquitinase with an ATP-independent isopeptidase activity, cleaving at the C-terminus of the ubiquitin moiety. Catalyzes its own deubiquitination. In vitro, isoform 2, but not isoform 3, shows deubiquitinating activity. Promotes plasma membrane localization of ARF6 and selectively regulates ARF6-dependent endocytic protein trafficking. Is able to initiate tumorigenesis by inducing the production of matrix metalloproteinases following NF-kappa-B activation. May act as a GTPase-activating protein for RAB3A. In Homo sapiens (Human), this protein is Ubiquitin carboxyl-terminal hydrolase 6 (USP6).